The following is a 104-amino-acid chain: Fusaric acid biosynthesis protein 2 (104 aa).

This sequence belongs to the YciI family.

It participates in mycotoxin biosynthesis. Its function is as follows. Part of the gene cluster that mediates the biosynthesis of fusaric acid, a mycotoxin with low to moderate toxicity to animals and humans, but with high phytotoxic properties. L-aspartate is suggested as fusaric acid amino acid precursor that is activated and further processed to O-acetyl-L-homoserine by cluster enzymes aspartate kinase FUB3 and homoserine O-acetyltransferase FUB5, as well as enzymes of the primary metabolism. The polyketide synthase (PKS) FUB1 generates the triketide trans-2-hexenal which is presumptively released by the hydrolase FUB4 and linked to the NRPS-bound amino acid precursor by NAD(P)-dependent dehydrogenase FUB6. FUB1, FUB4, and the non-canonical NRPS Fub8 may form an enzyme complex. Further processing of the NRPS-bound intermediate might be carried out by FUB6 and the sulfhydrylase FUB7, enabling a spontaneous electrocyclization to close the carbon backbone of fusaric acid. Dihydrofusaric acid is likely to be released via reduction by the thioester reductase (TR) domain of FUB8 whereupon the final oxidation to fusaric acid may (also) be performed by the FMN-dependent dehydrogenase FUB9. This chain is Fusaric acid biosynthesis protein 2, found in Gibberella fujikuroi (strain CBS 195.34 / IMI 58289 / NRRL A-6831) (Bakanae and foot rot disease fungus).